Consider the following 246-residue polypeptide: NAD-dependent protein deacylase (246 aa).

Positions 2-246 (PTAVSDAAAP…AGVCLPAMLA (245 aa)) constitute a Deacetylase sirtuin-type domain. Position 29–49 (29–49 (GAGVSAESGVPTFRDALTGLW)) interacts with NAD(+). Substrate is bound by residues Y74 and R77. NAD(+) is bound at residue 107–110 (QNVD). The active-site Proton acceptor is H125. Residues C137, C140, C153, and C156 each coordinate Zn(2+). NAD(+) is bound by residues 193 to 195 (GTS), 219 to 221 (NPE), and A237.

The protein belongs to the sirtuin family. Class III subfamily. It depends on Zn(2+) as a cofactor.

Its subcellular location is the cytoplasm. It carries out the reaction N(6)-acetyl-L-lysyl-[protein] + NAD(+) + H2O = 2''-O-acetyl-ADP-D-ribose + nicotinamide + L-lysyl-[protein]. The catalysed reaction is N(6)-succinyl-L-lysyl-[protein] + NAD(+) + H2O = 2''-O-succinyl-ADP-D-ribose + nicotinamide + L-lysyl-[protein]. Its function is as follows. NAD-dependent lysine deacetylase and desuccinylase that specifically removes acetyl and succinyl groups on target proteins. Modulates the activities of several proteins which are inactive in their acylated form. The protein is NAD-dependent protein deacylase of Ralstonia nicotianae (strain ATCC BAA-1114 / GMI1000) (Ralstonia solanacearum).